We begin with the raw amino-acid sequence, 297 residues long: HTH-type transcriptional regulator ArgP (297 aa).

Residues 4 to 60 form the HTH lysR-type domain; that stretch reads PDYRTLQALDAVIRERGFERAAQKLCITQSAVSQRIKQLENMFGQPLLVRTVPPRPT. Residues 21-40 constitute a DNA-binding region (H-T-H motif); that stretch reads FERAAQKLCITQSAVSQRIK.

It belongs to the LysR transcriptional regulatory family. In terms of assembly, homodimer.

Its function is as follows. Controls the transcription of genes involved in arginine and lysine metabolism. The sequence is that of HTH-type transcriptional regulator ArgP from Klebsiella pneumoniae subsp. pneumoniae (strain ATCC 700721 / MGH 78578).